The primary structure comprises 119 residues: Ribonuclease P protein component (119 aa).

Belongs to the RnpA family. Consists of a catalytic RNA component (M1 or rnpB) and a protein subunit.

The catalysed reaction is Endonucleolytic cleavage of RNA, removing 5'-extranucleotides from tRNA precursor.. Its function is as follows. RNaseP catalyzes the removal of the 5'-leader sequence from pre-tRNA to produce the mature 5'-terminus. It can also cleave other RNA substrates such as 4.5S RNA. The protein component plays an auxiliary but essential role in vivo by binding to the 5'-leader sequence and broadening the substrate specificity of the ribozyme. The protein is Ribonuclease P protein component of Streptococcus pyogenes serotype M1.